Consider the following 522-residue polypeptide: Leucine-rich repeat transmembrane neuronal protein 1 (522 aa).

Positions 1-34 (MDFLLLGLCLYWLLRRPSGVVLCLLGACFQMLPA) are cleaved as a signal peptide. The region spanning 35 to 63 (APSGCPQLCRCEGRLLYCEALNLTEAPHN) is the LRRNT domain. Over 35–427 (APSGCPQLCR…HAENAVQIHK (393 aa)) the chain is Extracellular. N-linked (GlcNAc...) asparagine glycans are attached at residues N56 and N63. LRR repeat units follow at residues 64-87 (LSGL…QFTG), 89-111 (MQLT…AFQK), 112-135 (LRRV…TFRP), 137-159 (PNLR…LFHG), 161-183 (RKLT…IFQD), 184-207 (CRSL…SFAG), 209-231 (FKLT…HFPR), 233-255 (ISLH…LDWV), 256-278 (WNLE…VFET), and 279-302 (VPHL…ILNS). The N-linked (GlcNAc...) asparagine glycan is linked to N130. In terms of domain architecture, LRRCT spans 314–365 (NLWDCGRNVCALASWLNNFQGRYDGNLQCASPEYAQGEDVLDAVYAFHLCED). N-linked (GlcNAc...) asparagine glycosylation occurs at N380. The segment at 382-401 (SDLGPPASSATTLADGGEGQ) is disordered. A helical transmembrane segment spans residues 428-448 (VVTGTMALIFSFLIVVLVLYV). At 449-522 (SWKCFPASLR…HQQPARECEV (74 aa)) the chain is on the cytoplasmic side.

The protein belongs to the LRRTM family. Predominantly expressed in forebrain regions including thalamus and cerebral cortex.

The protein resides in the cell membrane. It localises to the postsynaptic cell membrane. In terms of biological role, exhibits strong synaptogenic activity, restricted to excitatory presynaptic differentiation, acting at both pre- and postsynaptic level. The sequence is that of Leucine-rich repeat transmembrane neuronal protein 1 (LRRTM1) from Homo sapiens (Human).